Reading from the N-terminus, the 139-residue chain is D-ribose pyranase (139 aa).

The active-site Proton donor is the H20. Residues D28, H106, and 128 to 130 (YAN) each bind substrate.

The protein belongs to the RbsD / FucU family. RbsD subfamily. As to quaternary structure, homodecamer.

It is found in the cytoplasm. It carries out the reaction beta-D-ribopyranose = beta-D-ribofuranose. The protein operates within carbohydrate metabolism; D-ribose degradation; D-ribose 5-phosphate from beta-D-ribopyranose: step 1/2. Functionally, catalyzes the interconversion of beta-pyran and beta-furan forms of D-ribose. This chain is D-ribose pyranase, found in Vibrio cholerae serotype O1 (strain ATCC 39541 / Classical Ogawa 395 / O395).